The sequence spans 515 residues: 1-pyrroline-5-carboxylate dehydrogenase 1 (515 aa).

Residues Glu286 and Cys320 contribute to the active site.

It belongs to the aldehyde dehydrogenase family. RocA subfamily.

It carries out the reaction L-glutamate 5-semialdehyde + NAD(+) + H2O = L-glutamate + NADH + 2 H(+). It participates in amino-acid degradation; L-proline degradation into L-glutamate; L-glutamate from L-proline: step 2/2. The protein is 1-pyrroline-5-carboxylate dehydrogenase 1 (rocA1) of Halalkalibacterium halodurans (strain ATCC BAA-125 / DSM 18197 / FERM 7344 / JCM 9153 / C-125) (Bacillus halodurans).